A 460-amino-acid chain; its full sequence is MSHVRSAPAGKSGGGGGSTPAKRGRPFGSTTGSGAAAAAAAAAIGDAAAPAALVGPSLQVLTALSDQNNKRIVLALQSGLKSEILWALNALTVLSFKEKDDLRRDTTPLAKVPGLLDALLQVIDDWRDIAMPKDHTKPPRVRTLGVNTTLSGFGHENVEKVYSDTTTPSDDQTKTADSTVTKKRSAGFLFDEEGLFNVDDEGRTEKQQCAVAASNIIRNFSFMPENETVMVQHRHCLETVFQCLEDQNTEDDELITNMLETLVNLAPVLDLRIFSSSKPSFIKITEKRAVQAIMGMLASSIRVWHCAAAELIGRLIINPDNEPFLLPAIPQIYKRLVDLLSVPAVDAQAAAISALYNVAEVNMDFRLKLASERWAVDRLLKVVKTPHPVPEVCRKASMIVESLVSEPQNRMHLLVHENTFAEILTSEGKYSDTFARILYELTARPSNKVTAGQAIWGNIN.

Residues 1–10 (MSHVRSAPAG) are compositionally biased toward low complexity. Residues 1–32 (MSHVRSAPAGKSGGGGGSTPAKRGRPFGSTTG) are disordered. 3 ARM repeats span residues 225 to 267 (ENET…NLAP), 321 to 360 (NEPF…NVAE), and 364 to 405 (DFRL…SLVS).

Interacts with CHR719, SWI3A and SWI3C. As to expression, expressed at low levels in coleoptiles, leaf tongues, mature leaves and nodes during the vegetative phase. Highly expressed in reproductive tissues such as young panicles, early developing seeds, embryos and endosperms.

The protein resides in the nucleus. Functionally, plays critical roles in both embryo and endosperm development. Required for free nuclei division and cellularization in early endosperm development, by preventing premature cell death in the endosperm. Involved in the regulation of pattern formation and organ differentiation during embryogenesis, by regulating genes involved in the early stages of seed development. The sequence is that of Armadillo repeat-containing protein LFR from Oryza sativa subsp. japonica (Rice).